Here is a 330-residue protein sequence, read N- to C-terminus: Taste receptor type 2 member 136 (330 aa).

The Extracellular segment spans residues 1 to 32 (MKSQPVTQELHFIFPLFKTISSDIMSFLVSIA). The helical transmembrane segment at 33–53 (GIAMLAQIVLGTFANVFIVLV) threads the bilayer. Topologically, residues 54–73 (TCTDCIRRRKLFLADGILTS) are cytoplasmic. The chain crosses the membrane as a helical span at residues 74-94 (LAFCRIGMLWVILISWCSIVF). Residues 95–122 (HQALSLQVRFSICVGWAVTNHFNMWLAT) lie on the Extracellular side of the membrane. Residues 123–143 (ILSILYLLKIGNFSNLIFLGL) traverse the membrane as a helical segment. At 144–149 (KRKIKS) the chain is on the cytoplasmic side. The chain crosses the membrane as a helical span at residues 150-170 (VFIVVLLASLVLLFPNLITVT). At 171–201 (VCETVQANGYRGNLTGKTKRTYFMNLTAMIS) the chain is on the extracellular side. 2 N-linked (GlcNAc...) asparagine glycosylation sites follow: N183 and N195. Residues 202–222 (FTLDNIISFTISMVCFLLLIY) form a helical membrane-spanning segment. Residues 223 to 248 (SLCKHLRTMRLYGKGPHNPSASAHIK) are Cytoplasmic-facing. Residues 249–269 (ALQAVISFLLLFSMFILSLII) form a helical membrane-spanning segment. Over 270-283 (SGYNYMKPLNEPVH) the chain is Extracellular. A helical transmembrane segment spans residues 284–304 (LICQLIGTLYPSSHSYVLLWG). The Cytoplasmic segment spans residues 305–330 (NRRIKLAFVLAMVQVRARLWLKEEKP).

Belongs to the G-protein coupled receptor T2R family.

The protein resides in the membrane. Functionally, putative taste receptor which may play a role in the perception of bitterness. The chain is Taste receptor type 2 member 136 from Rattus norvegicus (Rat).